The sequence spans 4576 residues: Mucin-2 (4576 aa).

Positions 1–20 (MGLPLARLVAACLVLALAKG) are cleaved as a signal peptide. Residue Ser-21 is modified to Phosphoserine. The VWFD 1 domain occupies 32 to 205 (HVCSTWGDFH…KINKPEVQCE (174 aa)). Cystine bridges form between Cys-34/Cys-166, Cys-56/Cys-204, Cys-64/Cys-163, Cys-216/Cys-253, Cys-223/Cys-248, Cys-235/Cys-273, Cys-255/Cys-261, Cys-263/Cys-289, Cys-293/Cys-327, Cys-306/Cys-319, Cys-310/Cys-349, Cys-329/Cys-343, Cys-351/Cys-373, Cys-368/Cys-385, Cys-371/Cys-380, Cys-389/Cys-526, Cys-411/Cys-561, Cys-433/Cys-441, Cys-572/Cys-617, Cys-586/Cys-612, Cys-599/Cys-637, Cys-619/Cys-625, Cys-627/Cys-652, Cys-659/Cys-696, Cys-672/Cys-686, Cys-676/Cys-716, Cys-698/Cys-710, Cys-718/Cys-740, and Cys-738/Cys-747. A Ca(2+)-binding site is contributed by Asp-46. 2 residues coordinate Cu(+): Met-143 and Met-151. Residue Glu-153 coordinates Cu(2+). A glycan (N-linked (GlcNAc...) asparagine) is linked at Asn-160. Ca(2+) is bound by residues Asp-168, Asn-170, and Glu-177. Residue His-275 coordinates Cu(2+). A TIL domain is found at 293-349 (CPNNMVYLESSSPCVDTCSHLEVSSLCEEHYMDGCFCPEGTVYDDITGSGCIPVSQC). His-322 contacts Cu(2+). Met-324 serves as a coordination point for Cu(+). In terms of domain architecture, VWFD 2 spans 387 to 562 (ETCALEGGSH…NTWKAQSSCH (176 aa)). Asp-401 serves as a coordination point for Ca(2+). Asn-421 carries N-linked (GlcNAc...) asparagine glycosylation. Ca(2+) is bound by residues Asn-528, Asn-530, Leu-532, Asp-535, and Asp-536. N-linked (GlcNAc...) asparagine glycosylation occurs at Asn-668. N-linked (GlcNAc...) asparagine glycosylation occurs at Asn-768. 21 cysteine pairs are disulfide-bonded: Cys-782–Cys-818, Cys-800–Cys-812, Cys-820–Cys-843, Cys-837–Cys-855, Cys-841–Cys-850, Cys-859–Cys-990, Cys-881–Cys-1025, Cys-890–Cys-987, Cys-907–Cys-914, Cys-1035–Cys-1078, Cys-1049–Cys-1073, Cys-1060–Cys-1100, Cys-1080–Cys-1088, Cys-1090–Cys-1115, Cys-1106–Cys-1135, Cys-1119–Cys-1161, Cys-1143–Cys-1185, Cys-1165–Cys-1179, Cys-1187–Cys-1211, Cys-1206–Cys-1236, and Cys-1209–Cys-1219. An N-linked (GlcNAc...) asparagine glycan is attached at Asn-838. The 170-residue stretch at 857–1026 (STCSIYGSGH…NSWKEASTCP (170 aa)) folds into the VWFD 3 domain. Asp-871 is a binding site for Ca(2+). Asn-893 carries N-linked (GlcNAc...) asparagine glycosylation. Ca(2+) is bound by residues Asn-992, Asp-994, Asn-999, and Asp-1000. Asn-1137 and Asn-1152 each carry an N-linked (GlcNAc...) asparagine glycan. 3 N-linked (GlcNAc...) asparagine glycosylation sites follow: Asn-1213, Asn-1228, and Asn-1244. O-linked (GalNAc) threonine glycans are attached at residues Thr-1265, Thr-1268, Thr-1269, Thr-1281, and Thr-1292. The Ca(2+) site is built by Asn-1305, His-1308, Gly-1315, Asp-1316, and Glu-1318. N-linked (GlcNAc...) asparagine glycosylation is present at Asn-1352. Residues Asp-1375 and Tyr-1376 each contribute to the Ca(2+) site. Tandem repeats lie at residues 1395-1415 (SPTT…PTTL), 1416-1427 (PTSSPVTSSATL), 1428-1437 (PTTSSITSTI), 1438-1453 (SPTT…SPTT), and 1454-1460 (SPTTSPT). The disordered stretch occupies residues 1395 to 2866 (SPTTSTTTLS…PTTSSTFTTP (1472 aa)). A 7B repeat occupies 1478–1497 (PSTTSPTTPSTTPSTTSPTT). The 8A repeat unit spans residues 1498–1510 (PSTTSPTTPTSTS). One copy of the 9B repeat lies at 1530-1556 (SPTTSPTTPSTTSPTISTTTSTISPTT). The stretch at 1557–1572 (PSTTSPNTPSTTSSTI) is one 10A repeat. Residues 1573 to 1588 (PSTTSPTTPSTTSPTI) form a 10B repeat. The 11A repeat unit spans residues 1589–1607 (STTTSTTSPTTPSTTSPTT). An 11B repeat occupies 1608–1634 (PSTTSPTTPSTTSPTISTTTLTTSPTT). 2 repeat units span residues 1635 to 1642 (PSTTSPTT) and 1665 to 1681 (ISPT…LSTT). Asn-2529 and Asn-2910 each carry an N-linked (GlcNAc...) asparagine glycan. Low complexity-rich tracts occupy residues 2975–3623 (PSST…GSTP) and 3631–3706 (PGPT…TSPS). Positions 2975–3706 (PSSTTTETPT…SSTSPITSPS (732 aa)) are disordered. N-linked (GlcNAc...) asparagine glycans are attached at residues Asn-3734, Asn-3745, and Asn-3756. Residues 3764–3774 (STPTPSTPTPT) show a composition bias toward pro residues. The segment at 3764–3806 (STPTPSTPTPTPSQTTTPSTTSSKSTPSTPQSTSPKSTLSTPT) is disordered. Residues 3775–3806 (PSQTTTPSTTSSKSTPSTPQSTSPKSTLSTPT) are compositionally biased toward low complexity. Asn-3823, Asn-3830, and Asn-3903 each carry an N-linked (GlcNAc...) asparagine glycan. In terms of domain architecture, VWFD 4 spans 3880–4063 (CYCTGWGDPH…VNDPSKPHCP (184 aa)). Disulfide bonds link Cys-3882-Cys-4023, Cys-3904-Cys-4062, and Cys-3928-Cys-3936. Residues Asn-3991, Asn-4017, Asn-4028, Asn-4083, Asn-4149, Asn-4183, Asn-4254, Asn-4277, Asn-4351, Asn-4366, Asn-4434, Asn-4465, and Asn-4488 are each glycosylated (N-linked (GlcNAc...) asparagine). VWFC domains are found at residues 4213-4282 (CVGP…TSCK) and 4320-4387 (GVCV…KKCQ). Cystine bridges form between Cys-4471–Cys-4518, Cys-4485–Cys-4532, Cys-4494–Cys-4548, and Cys-4498–Cys-4550. Residues 4471 to 4556 (CSAVSVMKEI…SCLCQDTVCG (86 aa)) enclose the CTCK domain.

In terms of assembly, homomultimer; disulfide-linked. The N- and C-terminus mediate their assembly into higher order structures to form filaments. The CTCK domains of two polypeptides associate in the endoplasmic reticulum to generate intermolecularly disulfide-bonded dimers. These dimers progress to the Golgi apparatus, which is a more acidic environment than the endoplasmic reticulum. Under acidic conditions, the N-termini form non-covalent intermolecular interactions that juxtapose assemblies of the third VWD domain (VWD3) from different CTCK-linked dimers. The VWD3 assemblies then become disulfide bonded to one another to produce long, disulfide-linked polymers that remain highly compact until secretion. Interacts with FCGBP. Interacts with AGR2; disulfide-linked. O-glycosylated. O-glycosylation is required for mucin assembly. Goblet cells synthesize two forms of mucin that differ in branched chain O-glycosylation and the site of production in the colon. In terms of processing, may undergo proteolytic cleavage in the outer mucus layer of the colon, contributing to the expanded volume and loose nature of this layer which allows for bacterial colonization in contrast to the inner mucus layer which is dense and devoid of bacteria. Post-translationally, at low pH of 6 and under, undergoes autocatalytic cleavage in vitro in the N-terminal region of the fourth VWD domain. It is likely that this also occurs in vivo and is triggered by the low pH of the late secretory pathway. Highly expressed in goblet cells of the colon with lower levels in the small intestine and no expression in the stomach (at protein level).

The protein resides in the secreted. Its function is as follows. Coats the epithelia of the intestines and other mucus membrane-containing organs to provide a protective, lubricating barrier against particles and infectious agents at mucosal surfaces. Major constituent of the colon mucus, which is mainly formed by large polymeric networks of MUC2 secreted by goblet cells that cover the exposed surfaces of intestine. MUC2 networks form hydrogels that guard the underlying epithelium from pathogens and other hazardous matter entering from the outside world, while permitting nutrient absorption and gas exchange. Acts as a divalent copper chaperone that protects intestinal cells from copper toxicity and facilitates nutritional copper unptake into cells. Binds both Cu(2+) and its reduced form, Cu(1+), at two juxtaposed binding sites: Cu(2+), once reduced to Cu(1+) by vitamin C (ascorbate) or other dietary antioxidants, transits to the other binding site. MUC2-bound Cu(1+) is protected from oxidation in aerobic environments, and can be released for nutritional delivery to cells. Mucin gels store antimicrobial molecules that participate in innate immunity. Mucin glycoproteins also house and feed the microbiome, lubricate tissue surfaces, and may facilitate the removal of contaminants and waste products from the body. Goblet cells synthesize two forms of MUC2 mucin that differ in branched chain O-glycosylation and the site of production in the colon: a (1) 'thick' mucus that wraps the microbiota to form fecal pellets is produced in the proximal, ascending colon. 'Thick' mucus transits along the descending colon and is lubricated by a (2) 'thin' MUC2 mucus produced in the distal colon which adheres to the 'thick' mucus. This chain is Mucin-2, found in Mus musculus (Mouse).